Here is a 1095-residue protein sequence, read N- to C-terminus: Tyrosine-sulfated glycopeptide receptor 1 (1095 aa).

Residues 23 to 43 traverse the membrane as a helical segment; sequence PHMVLFVLLYVLSISVFFLTV. 2 N-linked (GlcNAc...) asparagine glycosylation sites follow: asparagine 62 and asparagine 73. LRR repeat units follow at residues 91–115, 116–139, 141–165, 170–195, 197–221, 223–246, 247–270, 271–294, 295–318, 320–342, 344–366, 367–391, 393–415, 416–439, 441–466, 470–494, 495–517, 518–542, and 566–589; these read ENRV…VLDL, QRLS…FLSA, DQLL…SFGN, IFPI…VFLQ, AFNL…MCTA, PQLT…LSRC, SRLS…IYNL, PELE…ITRL, TKLT…IGKL, KLSS…LANC, KLVK…DFSR, FQSL…VYSC, MMTA…VLEL, ESLS…SILQ, CKKL…DFLR, FPSL…LIKL, QRVE…WLGT, LPDL…LFQL, and NPNN…IYIK. An N-linked (GlcNAc...) asparagine glycan is attached at asparagine 165. N-linked (GlcNAc...) asparagine glycosylation is found at asparagine 199, asparagine 204, and asparagine 207. N-linked (GlcNAc...) asparagine glycosylation occurs at asparagine 258. N-linked (GlcNAc...) asparagine glycosylation occurs at asparagine 341. An N-linked (GlcNAc...) asparagine glycan is attached at asparagine 377. N-linked (GlcNAc...) asparagine glycosylation is present at asparagine 430. N-linked (GlcNAc...) asparagine glycans are attached at residues asparagine 569, asparagine 592, asparagine 616, asparagine 627, asparagine 640, asparagine 662, and asparagine 714. 3 LRR repeats span residues 604–628, 629–652, and 654–677; these read LKVL…LSNL, TNLE…LTGL, and FLSY…QFDT. A helical membrane pass occupies residues 721–741; sequence LVLGLFFGVSLILVLLALLVL. A phosphothreonine mark is found at threonine 792 and threonine 800. A Protein kinase domain is found at 803–1074; that stretch reads FSQANIIGCG…PNIQQVVDWL (272 aa). ATP is bound by residues 809–817 and lysine 831; that span reads IGCGGFGLV. A phosphotyrosine mark is found at tyrosine 876 and tyrosine 916. Residue aspartate 929 is the Proton acceptor of the active site. Tyrosine 971 bears the Phosphotyrosine mark.

This sequence belongs to the protein kinase superfamily. Ser/Thr protein kinase family. As to quaternary structure, homo- and heterodimers with PSKR1. Interacts (via C-terminus) with AHA1 and AHA2 (via the R-domain). Post-translationally, autophosphorylated. As to expression, expressed ubiquitously, including in the shoot apical meristem and in the elongation zone of the root meristem.

The protein resides in the cell membrane. The enzyme catalyses L-seryl-[protein] + ATP = O-phospho-L-seryl-[protein] + ADP + H(+). It catalyses the reaction L-threonyl-[protein] + ATP = O-phospho-L-threonyl-[protein] + ADP + H(+). Its function is as follows. Tyrosine-sulfated glycopeptide receptor with a serine/threonine-protein kinase activity. Regulates, in response to tyrosine-sulfated glycopeptide binding, a signaling cascade involved in cellular proliferation and plant growth. Not involved in PSK perception. Involved in plant immunity, with antagonistic effects on bacterial and fungal resistances. Mediates activation of the plasma membrane H(+)-ATPase by PSY1. Phosphorylates AHA2 at Thr-881. The polypeptide is Tyrosine-sulfated glycopeptide receptor 1 (Arabidopsis thaliana (Mouse-ear cress)).